We begin with the raw amino-acid sequence, 95 residues long: Citrate lyase acyl carrier protein (95 aa).

At Ser14 the chain carries O-(phosphoribosyl dephospho-coenzyme A)serine.

The protein belongs to the CitD family. As to quaternary structure, oligomer with a subunit composition of (alpha,beta,gamma)6.

The protein resides in the cytoplasm. In terms of biological role, covalent carrier of the coenzyme of citrate lyase. In Haemophilus ducreyi (strain 35000HP / ATCC 700724), this protein is Citrate lyase acyl carrier protein.